The sequence spans 1114 residues: Lysylphosphatidylglycerol biosynthesis bifunctional protein LysX (1114 aa).

Residues 1–11 (MSASTETHHAS) are compositionally biased toward basic and acidic residues. Residues 1 to 26 (MSASTETHHASEAAVPTAPRPRPGLG) are disordered. The segment at 1–618 (MSASTETHHA…GLHSDGSAPG (618 aa)) is phosphatidylglycerol lysyltransferase. 6 consecutive transmembrane segments (helical) span residues 38 to 58 (IAGL…ISPV), 77 to 97 (APDT…ALAS), 101 to 121 (IAWW…VIVS), 126 to 146 (NVNA…LIAA), 164 to 184 (GVLI…VELF), and 219 to 239 (FVNT…VITL). Positions 619 to 1114 (EGLAPTATGP…LAFPLAKPRQ (496 aa)) are lysine--tRNA ligase. A DNA-binding region (OB) is located at residues 674-751 (VRIAGRLLRI…LSLLANEWRM (78 aa)). D1025 and E1032 together coordinate Mg(2+).

The protein in the N-terminal section; belongs to the LPG synthetase family. It in the C-terminal section; belongs to the class-II aminoacyl-tRNA synthetase family. The cofactor is Mg(2+).

It is found in the cell membrane. The enzyme catalyses tRNA(Lys) + L-lysine + ATP = L-lysyl-tRNA(Lys) + AMP + diphosphate. It carries out the reaction L-lysyl-tRNA(Lys) + a 1,2-diacyl-sn-glycero-3-phospho-(1'-sn-glycerol) = a 1,2-diacyl-sn-glycero-3-phospho-1'-(3'-O-L-lysyl)-sn-glycerol + tRNA(Lys). Its function is as follows. Catalyzes the production of L-lysyl-tRNA(Lys)transfer and the transfer of a lysyl group from L-lysyl-tRNA(Lys) to membrane-bound phosphatidylglycerol (PG), which produces lysylphosphatidylglycerol (LPG), one of the components of the bacterial membrane with a positive net charge. LPG synthesis contributes to the resistance to cationic antimicrobial peptides (CAMPs) and likely protects M.tuberculosis against the CAMPs produced by competiting microorganisms (bacteriocins). In fact, the modification of anionic phosphatidylglycerol with positively charged L-lysine results in repulsion of the peptides. This Rhodococcus jostii (strain RHA1) protein is Lysylphosphatidylglycerol biosynthesis bifunctional protein LysX (lysX).